Consider the following 205-residue polypeptide: MSNIVWHQHSVDQAARAKLKGQNPVLLWFTGLSGAGKSTLAGALERALFEAGFHTYLLDGDNVRHGLCKDLGFSVADRDENLRRVGEVAKLMVDAGLVVLSAFISPTREERDSIRARFPEGQFIEVHVSTPLSICEQRDPKGLYVKARRGEISNFTGISSPYEAPLSAELTIDTSKGDLASQVRALIDYLTAIGVINPDKAKALA.

31–38 contacts ATP; that stretch reads GLSGAGKS. Catalysis depends on Ser105, which acts as the Phosphoserine intermediate.

This sequence belongs to the APS kinase family.

It carries out the reaction adenosine 5'-phosphosulfate + ATP = 3'-phosphoadenylyl sulfate + ADP + H(+). It participates in sulfur metabolism; hydrogen sulfide biosynthesis; sulfite from sulfate: step 2/3. Its function is as follows. Catalyzes the synthesis of activated sulfate. This Shewanella sp. (strain ANA-3) protein is Adenylyl-sulfate kinase.